The sequence spans 435 residues: Eukaryotic peptide chain release factor subunit 1 (435 aa).

The protein belongs to the eukaryotic release factor 1 family. In terms of assembly, heterodimer of two subunits, one of which binds GTP.

It is found in the cytoplasm. Its function is as follows. Directs the termination of nascent peptide synthesis (translation) in response to the termination codons UAA, UAG and UGA. The chain is Eukaryotic peptide chain release factor subunit 1 (SU2) from Podospora anserina (Pleurage anserina).